A 1634-amino-acid polypeptide reads, in one-letter code: Phosphatidylinositol 4-phosphate 3-kinase C2 domain-containing subunit beta (1634 aa).

The interval 2–298 (SSTQGNGEHW…YASRYGNRKN (297 aa)) is interaction with GRB2. Disordered regions lie at residues 45–188 (EENR…QPSD) and 259–315 (GRGP…VGSR). Over residues 87-112 (SDPTLNYNSLSPQEGPPNHSTSQGPQ) the composition is skewed to polar residues. Residues 176–187 (GSPSSSKISQPS) are compositionally biased toward low complexity. The span at 259–270 (GRGPLDFSKDTS) shows a compositional bias: basic and acidic residues. Positions 375–463 (EVNLKVTVLC…DIDIRLQLME (89 aa)) constitute a PI3K-RBD domain. In terms of domain architecture, C2 PI3K-type spans 635-786 (VYATHRIPII…DSVILQIDFP (152 aa)). Residues 805-981 (RYEFGSLREE…QYLLAALLCC (177 aa)) form the PIK helical domain. The PI3K/PI4K catalytic domain maps to 1050–1328 (VPRDCSYFNS…LIESSLGSVA (279 aa)). Residues 1056–1062 (YFNSNAV) are G-loop. A catalytic loop region spans residues 1192–1200 (GICDRHNDN). The segment at 1211 to 1237 (HIDFGRFLGHAQMFGNIKRDRAPFVFT) is activation loop. One can recognise a PX domain in the interval 1365–1481 (GRISDVFLCR…TFFHPLPRDE (117 aa)). Residues 1504 to 1624 (VGGEVKLSIS…DLAQEKTGWF (121 aa)) enclose the C2 domain.

This sequence belongs to the PI3/PI4-kinase family. As to quaternary structure, part of a complex with ERBB2 and EGFR. Part of a complex with phosphorylated EGFR and GRB2. Interacts with phosphorylated EGFR and PDGFR, maybe indirectly. Interacts with GRB2. Requires Ca(2+) as cofactor. It depends on Mg(2+) as a cofactor. Mn(2+) is required as a cofactor. As to expression, expressed in columnar and transitional epithelia, mononuclear cells, and ganglion cells (at protein level). Widely expressed, with highest levels in thymus and placenta and lowest in peripheral blood, skeletal muscle and kidney.

The protein resides in the microsome. Its subcellular location is the cell membrane. It localises to the cytoplasm. The protein localises to the cytosol. It is found in the nucleus. The protein resides in the endoplasmic reticulum. The enzyme catalyses a 1,2-diacyl-sn-glycero-3-phospho-(1D-myo-inositol 4-phosphate) + ATP = a 1,2-diacyl-sn-glycero-3-phospho-(1D-myo-inositol-3,4-bisphosphate) + ADP + H(+). It catalyses the reaction a 1,2-diacyl-sn-glycero-3-phospho-(1D-myo-inositol) + ATP = a 1,2-diacyl-sn-glycero-3-phospho-(1D-myo-inositol-3-phosphate) + ADP + H(+). Its activity is regulated as follows. Activated by GRB2. Phosphorylates PtdIns and PtdIns4P with a preference for PtdIns. Does not phosphorylate PtdIns(4,5)P2. May be involved in EGF and PDGF signaling cascades. The chain is Phosphatidylinositol 4-phosphate 3-kinase C2 domain-containing subunit beta (PIK3C2B) from Homo sapiens (Human).